Consider the following 192-residue polypeptide: Adenylate kinase (192 aa).

ATP is bound at residue 10-18; the sequence is GVPGVGGTT.

This sequence belongs to the archaeal adenylate kinase family. In terms of assembly, monomer.

The protein localises to the cytoplasm. The catalysed reaction is AMP + ATP = 2 ADP. The sequence is that of Adenylate kinase from Methanococcus maripaludis (strain DSM 14266 / JCM 13030 / NBRC 101832 / S2 / LL).